The chain runs to 235 residues: Small ribosomal subunit protein uS2c (235 aa).

Belongs to the universal ribosomal protein uS2 family.

It is found in the plastid. The protein resides in the chloroplast. This is Small ribosomal subunit protein uS2c (rps2) from Anthoceros angustus (Hornwort).